We begin with the raw amino-acid sequence, 245 residues long: 1-(5-phosphoribosyl)-5-[(5-phosphoribosylamino)methylideneamino] imidazole-4-carboxamide isomerase (245 aa).

Catalysis depends on aspartate 8, which acts as the Proton acceptor. Aspartate 129 serves as the catalytic Proton donor.

The protein belongs to the HisA/HisF family.

Its subcellular location is the cytoplasm. The catalysed reaction is 1-(5-phospho-beta-D-ribosyl)-5-[(5-phospho-beta-D-ribosylamino)methylideneamino]imidazole-4-carboxamide = 5-[(5-phospho-1-deoxy-D-ribulos-1-ylimino)methylamino]-1-(5-phospho-beta-D-ribosyl)imidazole-4-carboxamide. The protein operates within amino-acid biosynthesis; L-histidine biosynthesis; L-histidine from 5-phospho-alpha-D-ribose 1-diphosphate: step 4/9. In Sinorhizobium fredii (strain NBRC 101917 / NGR234), this protein is 1-(5-phosphoribosyl)-5-[(5-phosphoribosylamino)methylideneamino] imidazole-4-carboxamide isomerase.